The primary structure comprises 57 residues: UPF0391 membrane protein RPD_3366 (57 aa).

2 consecutive transmembrane segments (helical) span residues 4-24 (WVVT…GGIA) and 30-50 (IAKV…VVGL).

The protein belongs to the UPF0391 family.

It localises to the cell membrane. The chain is UPF0391 membrane protein RPD_3366 from Rhodopseudomonas palustris (strain BisB5).